The chain runs to 270 residues: G-box-binding factor 4 (270 aa).

Residues 1-46 are disordered; it reads MASFKLMSSSNSDLSRRNSSSASSSPSIRSSHHLRPNPHADHSRIS. A compositionally biased stretch (low complexity) spans 8-29; that stretch reads SSSNSDLSRRNSSSASSSPSIR. Serine 27 bears the Phosphoserine mark. Positions 187 to 250 constitute a bZIP domain; that stretch reads AAQRQKRMIK…YKKLMEVLIP (64 aa). Residues 190-208 form a basic motif region; the sequence is RQKRMIKNRESAARSRERK. Residues 215–229 are leucine-zipper; sequence LETLAAKLEEENEQL. Residues 250-270 are disordered; sequence PVDEKPRPPSRPLSRSHSLEW. Residues 261 to 270 show a composition bias toward low complexity; sequence PLSRSHSLEW.

The protein belongs to the bZIP family. In terms of assembly, DNA-binding heterodimer with GBF2 and GBF3; non DNA-binding homodimer.

The protein resides in the nucleus. Its function is as follows. Binds to the G-box motif (5'-CCACGTGG-3') of the rbcS-1A gene promoter. G-box and G-box-like motifs are cis-acting elements defined in promoters of certain plant genes which are regulated by such diverse stimuli as light-induction or hormone control. In Arabidopsis thaliana (Mouse-ear cress), this protein is G-box-binding factor 4 (GBF4).